Reading from the N-terminus, the 252-residue chain is PF03932 family protein CutC (252 aa).

This sequence belongs to the CutC family.

It localises to the cytoplasm. This is PF03932 family protein CutC from Pectobacterium atrosepticum (strain SCRI 1043 / ATCC BAA-672) (Erwinia carotovora subsp. atroseptica).